Here is a 100-residue protein sequence, read N- to C-terminus: Aspartyl/glutamyl-tRNA(Asn/Gln) amidotransferase subunit C (100 aa).

It belongs to the GatC family. In terms of assembly, heterotrimer of A, B and C subunits.

It carries out the reaction L-glutamyl-tRNA(Gln) + L-glutamine + ATP + H2O = L-glutaminyl-tRNA(Gln) + L-glutamate + ADP + phosphate + H(+). It catalyses the reaction L-aspartyl-tRNA(Asn) + L-glutamine + ATP + H2O = L-asparaginyl-tRNA(Asn) + L-glutamate + ADP + phosphate + 2 H(+). Functionally, allows the formation of correctly charged Asn-tRNA(Asn) or Gln-tRNA(Gln) through the transamidation of misacylated Asp-tRNA(Asn) or Glu-tRNA(Gln) in organisms which lack either or both of asparaginyl-tRNA or glutaminyl-tRNA synthetases. The reaction takes place in the presence of glutamine and ATP through an activated phospho-Asp-tRNA(Asn) or phospho-Glu-tRNA(Gln). The polypeptide is Aspartyl/glutamyl-tRNA(Asn/Gln) amidotransferase subunit C (Erythrobacter litoralis (strain HTCC2594)).